The sequence spans 79 residues: DNA-directed RNA polymerase subunit omega (79 aa).

It belongs to the RNA polymerase subunit omega family. In terms of assembly, the RNAP catalytic core consists of 2 alpha, 1 beta, 1 beta' and 1 omega subunit. When a sigma factor is associated with the core the holoenzyme is formed, which can initiate transcription.

It carries out the reaction RNA(n) + a ribonucleoside 5'-triphosphate = RNA(n+1) + diphosphate. Promotes RNA polymerase assembly. Latches the N- and C-terminal regions of the beta' subunit thereby facilitating its interaction with the beta and alpha subunits. This Kosmotoga olearia (strain ATCC BAA-1733 / DSM 21960 / TBF 19.5.1) protein is DNA-directed RNA polymerase subunit omega.